The following is a 148-amino-acid chain: Holo-[acyl-carrier-protein] synthase (148 aa).

Mg(2+) is bound by residues D8 and E57.

The protein belongs to the P-Pant transferase superfamily. AcpS family. It depends on Mg(2+) as a cofactor.

Its subcellular location is the cytoplasm. The enzyme catalyses apo-[ACP] + CoA = holo-[ACP] + adenosine 3',5'-bisphosphate + H(+). In terms of biological role, transfers the 4'-phosphopantetheine moiety from coenzyme A to a Ser of acyl-carrier-protein. The protein is Holo-[acyl-carrier-protein] synthase of Ruegeria pomeroyi (strain ATCC 700808 / DSM 15171 / DSS-3) (Silicibacter pomeroyi).